The primary structure comprises 581 residues: MAKQLSFSNESREALEKGVNFVANAVKVTIGPKAKNVVIEKKFGSPDIVRDGSTVAKEIEIENPISNLGAKLIEQVASKTKESAGDGTTTATILTQKMVQEGLKNIASGANPMELKKGMEAGLSFVLEKLSSKSISLSGSDIQKVATVSAGGDEEIGSIISKAMDIVTSDGVITVEESQSLETELDITEGMSFDRGYSSPYFVTDQERQVCELENPKILITDQKISTLVDLVPILEEIQKSGSPFLILAEDIEGEALTTLVLNKNSGVLNVASVRAPLFGERRKAALEDIAILTGAKLISEDKSMTLDKVSINDLGKAKKITITKDKTTIVAFEDTKDLVKGRVEKLKREVNITESEYDQDKINERIAKLAGGVALIKVGAATETEMKYKKLRIEDSLNATKAAIEEGVVSGGGQTLIEISDDLLNLSKTSTDDLRTGINIVKEALLEPTKQIAKNAGFNGDVVVAEIKRLNKGFNANSGKYEDLKDSGILDPTKVIRLALQDSVSIAAMLLTTEVAMADIPEPEAAGPGGPGADPMGGMGGMGMPGMGGMGMPGMGGMGMPGMGGMGMPGMGGMGMPGMM.

ATP is bound by residues 29-32 (TIGP), 86-90 (DGTTT), Gly-413, and Asp-492. The tract at residues 522-541 (PEPEAAGPGGPGADPMGGMG) is disordered. Over residues 528-541 (GPGGPGADPMGGMG) the composition is skewed to gly residues.

The protein belongs to the chaperonin (HSP60) family. As to quaternary structure, forms a cylinder of 14 subunits composed of two heptameric rings stacked back-to-back. Interacts with the co-chaperonin GroES.

It localises to the cytoplasm. The enzyme catalyses ATP + H2O + a folded polypeptide = ADP + phosphate + an unfolded polypeptide.. Its function is as follows. Together with its co-chaperonin GroES, plays an essential role in assisting protein folding. The GroEL-GroES system forms a nano-cage that allows encapsulation of the non-native substrate proteins and provides a physical environment optimized to promote and accelerate protein folding. The chain is Chaperonin GroEL 1 from Prochlorococcus marinus (strain MIT 9301).